The primary structure comprises 252 residues: Diphthine synthase (252 aa).

Residues leucine 9, aspartate 85, valine 88, 113-114 (SI), leucine 165, alanine 202, and histidine 227 each bind S-adenosyl-L-methionine.

It belongs to the diphthine synthase family. As to quaternary structure, homodimer.

The catalysed reaction is 2-[(3S)-amino-3-carboxypropyl]-L-histidyl-[translation elongation factor 2] + 3 S-adenosyl-L-methionine = diphthine-[translation elongation factor 2] + 3 S-adenosyl-L-homocysteine + 3 H(+). The protein operates within protein modification; peptidyl-diphthamide biosynthesis. Functionally, S-adenosyl-L-methionine-dependent methyltransferase that catalyzes the trimethylation of the amino group of the modified target histidine residue in translation elongation factor 2 (EF-2), to form an intermediate called diphthine. The three successive methylation reactions represent the second step of diphthamide biosynthesis. The sequence is that of Diphthine synthase from Methanospirillum hungatei JF-1 (strain ATCC 27890 / DSM 864 / NBRC 100397 / JF-1).